The chain runs to 284 residues: MIRDTVVSGIFYPLEYHDLIEMIEYCYLNPRGPKKLPSKLGRYEKPIGVISPHAGYVYSGPIAAHSYKEISKKVSGNITAVIIGPNHSGMGSVVSTMEGIWKTPLGNLEIDNEFSERLWKECDIIDLDETAHLKEHSIEVQLPFLKHLELLNIAKFKFVPISMSLQDYDTAVGVGYMVAKVAKELNRKIIIIASSDFSHYEPEEIASKKDAIIIKDILKMEEEEIFTDVVTNNVTMCGYGPIIAMIKAMKVLGAKESKLLSYSTSGDVTKDYSEVVGYGALIIE.

It belongs to the MEMO1 family.

In Methanococcus vannielii (strain ATCC 35089 / DSM 1224 / JCM 13029 / OCM 148 / SB), this protein is MEMO1 family protein Mevan_0697.